We begin with the raw amino-acid sequence, 150 residues long: Putative solute carrier family 19 member 4 (150 aa).

Residues 118–137 (PSVREGACNEKSTENKKPQD) form a disordered region. The span at 124–136 (ACNEKSTENKKPQ) shows a compositional bias: basic and acidic residues.

This sequence belongs to the reduced folate carrier (RFC) transporter (TC 2.A.48) family.

The sequence is that of Putative solute carrier family 19 member 4 from Homo sapiens (Human).